The primary structure comprises 215 residues: LysM and putative peptidoglycan-binding domain-containing protein 2 (215 aa).

Residues Met-1–Glu-40 form a disordered region. Position 2 is an N-acetylalanine (Ala-2). Phosphoserine occurs at positions 5, 24, 34, and 58. Pro residues predominate over residues Pro-20–His-29. In terms of domain architecture, LysM spans Val-72–Ile-116. The segment at Ala-194 to Ser-215 is disordered.

This is LysM and putative peptidoglycan-binding domain-containing protein 2 (LYSMD2) from Bos taurus (Bovine).